Reading from the N-terminus, the 605-residue chain is MAPSSPEVSRIRNFCIIAHIDHGKSTLADRLLEMTHTLDRTQMDSAQVLDDMDLERERGITIKSHAVQMKYCSVAGDDYTLNLIDTPGHVDFSYEVSRSLAACEGALLVVDATQGVEAQTIANLYLAIEAGLEIIPVINKIDLPSSDVEGVARQIIDLIGIEREEILQVSAKAGLGVAELMEAIIARVPAPADNRKQPLRALIFDSVFDPYRGAVVYLRIVDGVLRRGEKVRFFANDKIFLADEIGTMALKRQPKEVLEAGDVGYLICSIKDVKDAKVGDTVTHAEVPAEKRLAGYKDVKPMVFSGLYPVNSNEFEDLRESLEKLSLNDASLVYTPETSVALGFGFRCGFLGLLHMEIIQERLEREYDMNIITTVPNVEYRVIMTNGETVIVDNPSKMPDTTRIAHVEEPYVSMQIITLADYIGNIMKLGMERRGEYRNTDYLDTQRVNMHFEFPLAEIVFDFHDRLKSISKGYASMDYEYIGYRESDLVKLDVLLNAEPVDALSIIVHRSKAYDWGRKLCGKLKGIIPKQMYEVAIQAAIGSRIISRETISAMRKNVLAKCYGGDISRKRKLLEKQKEGKKRMKQVGRVEVPQEAFLAILNIDE.

Positions 9-192 constitute a tr-type G domain; the sequence is SRIRNFCIIA…AIIARVPAPA (184 aa). GTP-binding positions include 21-26 and 139-142; these read DHGKST and NKID.

This sequence belongs to the TRAFAC class translation factor GTPase superfamily. Classic translation factor GTPase family. LepA subfamily.

Its subcellular location is the cell inner membrane. It carries out the reaction GTP + H2O = GDP + phosphate + H(+). Required for accurate and efficient protein synthesis under certain stress conditions. May act as a fidelity factor of the translation reaction, by catalyzing a one-codon backward translocation of tRNAs on improperly translocated ribosomes. Back-translocation proceeds from a post-translocation (POST) complex to a pre-translocation (PRE) complex, thus giving elongation factor G a second chance to translocate the tRNAs correctly. Binds to ribosomes in a GTP-dependent manner. The sequence is that of Elongation factor 4 from Chlorobium luteolum (strain DSM 273 / BCRC 81028 / 2530) (Pelodictyon luteolum).